We begin with the raw amino-acid sequence, 277 residues long: Myelin proteolipid protein (277 aa).

Over glycine 2 to arginine 9 the chain is Cytoplasmic. 3 S-palmitoyl cysteine lipidation sites follow: cysteine 6, cysteine 7, and cysteine 10. The chain crosses the membrane as a helical span at residues cysteine 10–glycine 36. Over histidine 37–asparagine 63 the chain is Extracellular. Residues valine 64–alanine 88 traverse the membrane as a helical segment. Over glutamate 89–lysine 151 the chain is Cytoplasmic. The S-palmitoyl cysteine moiety is linked to residue cysteine 109. At serine 114 the chain carries Phosphoserine. 2 positions are modified to phosphothreonine: threonine 116 and threonine 118. S-palmitoyl cysteine attachment occurs at residues cysteine 139 and cysteine 141. A helical membrane pass occupies residues phenylalanine 152–tyrosine 177. Residues phenylalanine 178–phenylalanine 233 are Extracellular-facing. Disulfide bonds link cysteine 184-cysteine 228 and cysteine 201-cysteine 220. The O-palmitoyl serine moiety is linked to residue serine 199. Residues glutamine 234–alanine 260 form a helical membrane-spanning segment. Over alanine 261 to phenylalanine 277 the chain is Cytoplasmic.

This sequence belongs to the myelin proteolipid protein family. Interacts with MAL.

It localises to the cell membrane. The protein resides in the myelin membrane. This is the major myelin protein from the central nervous system. It plays an important role in the formation or maintenance of the multilamellar structure of myelin. The sequence is that of Myelin proteolipid protein (Plp1) from Mus musculus (Mouse).